Here is a 353-residue protein sequence, read N- to C-terminus: UPF0283 membrane protein YcjF (353 aa).

A compositionally biased stretch (basic and acidic residues) spans 1 to 19 (MSEPLKPRIDFAEPLKEEP). Residues 1–35 (MSEPLKPRIDFAEPLKEEPTSAFKAQQTFSEAESR) form a disordered region. The next 3 membrane-spanning stretches (helical) occupy residues 70–90 (MVMG…VQWT), 100–120 (VALG…GSVV), and 213–233 (ESTL…FIAW).

This sequence belongs to the UPF0283 family.

It localises to the cell inner membrane. This Salmonella paratyphi B (strain ATCC BAA-1250 / SPB7) protein is UPF0283 membrane protein YcjF.